Consider the following 1342-residue polypeptide: MVYSYTEKKRIRKDFGKRPQVLDIPYLLSIQLDSFKKFIKIDPEGLHGLEAAFRSVFPICGYNGNSELQYVSYRLGDAIFDVKECQIRGATYSAPLRVRLRLVIYERDVLEPTVKDIKEQEVYMGEIPLMTNNGTFIINGTERVVVSQLHRSPGVFFDSDKGKTHSSGKVLYNARIIPYRGSWLDFEFDPKDNLFVRIDRRRKLPVTIILRALNYNTEEILNLFFEKNIFNINNNKIQLELVSERLRGETASFDIKKNGKIYVKKGRRITAKHIQELKKDKINSITVPVEYILGRIVSKNYLDPKTGETIILANTELSLEILTKLKNSSFFSIETLFTNDLDHGPYISETLRIDSSHDRISALMEIYRVMRPGEPLTKEATENLFENLFFSEDRYDLSSVGRMKFNRSLLRKKIEGVSTLNKEDIIDVIKKLIDIRNGKGEVDDIDHLGNRRIRSVGEMAENQFRIGLVRVERAVKERLSVGDLDTLMPQDMINAKPISAAIKEFFGSSQLSQFMDQNNPLSEITHKRRISALGLGGLTRERAGFEVRDVHPTHYGRVCPIETPEGPNIGLINSLSVYARTNSYGFLETPYRKVHNRLVTDEIHYLSAIEEGNYVIAQANTNIDKNNYFIDDLVTCRHKGESSLFNCNQVDYMDVSTQQIVSVGASLIPFLEHDDANRALMGANMQRQAVPTLKTDKPLVGTGMERAVAVDSGVTVVAKRGGIIQYIDASRIIIKVNEEETYTGEAGIDIYNLTKYTRSNQNTCINQKPCVKLREKINKNDVLADGPSTDLGELALGQNMRVAFMPWNGYNFEDSILVSEKVVQEDRFTTIHIQELSCISRDTKLGPEEISSDIPNVGEAALSKLDESGIVYIGAEVTGGDILVGKVTPKGETQLTPEEKLLRAIFGEKASDVKDSSLRVPNGVSGTVIDVQIFTRDGVKKDKRALEIENMQLKKAKKDLTEEFKIFELSLFSRIKKTLVSFNIKEDFLNKLPYEKWFKIDIQDRNKKKEIEKLLQQHNQLKKEFEKKIEVKRRKITQGDDLAPGVLKIVKVYLAVKRQIQPGDKMAGRHGNKGVISKINPVEDMPYDENGIPVDIVLNPLGVPSRMNIGQILETHLGMAAKGIGNKINNMLKKQEKISNLKKFIQKAFDLGENLRQKVNLDDFSNEEILDLAKNLKKGMPISTPVFDGAQENEIKQMLKFSNLPTSGQISLFDGRTGEKFERPVTVGYMYMLKLNHLVDDKMHARSTGSYSLVTQQPLGGKAQFGGQRFGEMEVWALEAYGASYTLQEMLTVKSDDVNGRTKMYKNIVDGNHQMEPGMPESFNVLLKEIRSLGINIELENE.

This sequence belongs to the RNA polymerase beta chain family. In terms of assembly, the RNAP catalytic core consists of 2 alpha, 1 beta, 1 beta' and 1 omega subunit. When a sigma factor is associated with the core the holoenzyme is formed, which can initiate transcription.

The enzyme catalyses RNA(n) + a ribonucleoside 5'-triphosphate = RNA(n+1) + diphosphate. Its function is as follows. DNA-dependent RNA polymerase catalyzes the transcription of DNA into RNA using the four ribonucleoside triphosphates as substrates. The chain is DNA-directed RNA polymerase subunit beta from Buchnera aphidicola subsp. Schizaphis graminum (strain Sg).